The following is a 250-amino-acid chain: DNA polymerase sliding clamp (250 aa).

It belongs to the PCNA family. Homotrimer. The subunits circularize to form a toroid; DNA passes through its center. Replication factor C (RFC) is required to load the toroid on the DNA.

In terms of biological role, sliding clamp subunit that acts as a moving platform for DNA processing. Responsible for tethering the catalytic subunit of DNA polymerase and other proteins to DNA during high-speed replication. The protein is DNA polymerase sliding clamp of Methanococcus maripaludis (strain C6 / ATCC BAA-1332).